The chain runs to 1418 residues: JmjC domain-containing histone demethylation protein 1 (1418 aa).

Disordered regions lie at residues 1-86, 102-162, and 308-329; these read MIGA…SSST, APLS…STFD, and GADR…SDEN. Basic and acidic residues predominate over residues 44–60; it reads WIDRGDSQAASYDRDRV. The segment covering 61–71 has biased composition (polar residues); it reads TSNNDVYSSTN. Residues 127-139 are compositionally biased toward basic and acidic residues; sequence STERPAKRPRSEK. The segment covering 143–162 has biased composition (polar residues); it reads PLHQPQTTVAPDANPSSTFD. The segment covering 308 to 321 has biased composition (basic and acidic residues); the sequence is GADRASLDVPPRGD. The segment at 331–391 adopts a PHD-type zinc-finger fold; sequence QANCAACNLV…KFICRRCRPI (61 aa). Positions 588 to 746 constitute a JmjC domain; the sequence is VSQSKLGKLI…MQIKVAKIEK (159 aa). Thr639 is a binding site for substrate. 2 residues coordinate Fe cation: His642 and Asp644. Residue Lys659 participates in substrate binding. His714 is a Fe cation binding site. 4 disordered regions span residues 891–964, 1090–1118, 1130–1195, and 1250–1394; these read PQWT…TVEI, NAAT…CDDC, YGRI…HTQR, and KPTA…DEPD. The span at 907-925 shows a compositional bias: basic and acidic residues; sequence LTEKKPAGRPSRRSERNAE. 2 stretches are compositionally biased toward basic and acidic residues: residues 1130–1143 and 1186–1195; these read YGRI…ERSK and AEGDMSHTQR. Polar residues predominate over residues 1250-1263; sequence KPTASLVSPPTSQA. A compositionally biased stretch (low complexity) spans 1341–1352; that stretch reads SSKKPASRPSSS.

The protein belongs to the JHDM1 histone demethylase family. The cofactor is Fe(2+).

The protein localises to the nucleus. It carries out the reaction N(6),N(6)-dimethyl-L-lysyl(36)-[histone H3] + 2 2-oxoglutarate + 2 O2 = L-lysyl(36)-[histone H3] + 2 formaldehyde + 2 succinate + 2 CO2. In terms of biological role, histone demethylase that specifically demethylates 'Lys-36' of histone H3, thereby playing a central role in histone code. This is JmjC domain-containing histone demethylation protein 1 (jhd1) from Aspergillus fumigatus (strain ATCC MYA-4609 / CBS 101355 / FGSC A1100 / Af293) (Neosartorya fumigata).